Here is a 309-residue protein sequence, read N- to C-terminus: HPr kinase/phosphorylase (309 aa).

Catalysis depends on residues His138 and Lys159. Position 153–160 (153–160 (GQSGVGKS)) interacts with ATP. Residue Ser160 participates in Mg(2+) binding. Residue Asp177 is the Proton acceptor; for phosphorylation activity. Proton donor; for dephosphorylation activity of the active site. Positions 201-210 (LEIRGLGIIN) are important for the catalytic mechanism of both phosphorylation and dephosphorylation. Glu202 serves as a coordination point for Mg(2+). Residue Arg243 is part of the active site. The interval 264–269 (PVRPGR) is important for the catalytic mechanism of dephosphorylation.

The protein belongs to the HPrK/P family. As to quaternary structure, homohexamer. Mg(2+) is required as a cofactor.

It carries out the reaction [HPr protein]-L-serine + ATP = [HPr protein]-O-phospho-L-serine + ADP + H(+). The catalysed reaction is [HPr protein]-O-phospho-L-serine + phosphate + H(+) = [HPr protein]-L-serine + diphosphate. Catalyzes the ATP- as well as the pyrophosphate-dependent phosphorylation of a specific serine residue in HPr, a phosphocarrier protein of the phosphoenolpyruvate-dependent sugar phosphotransferase system (PTS). HprK/P also catalyzes the pyrophosphate-producing, inorganic phosphate-dependent dephosphorylation (phosphorolysis) of seryl-phosphorylated HPr (P-Ser-HPr). The two antagonistic activities of HprK/P are regulated by several intracellular metabolites, which change their concentration in response to the absence or presence of rapidly metabolisable carbon sources (glucose, fructose, etc.) in the growth medium. Also phosphorylates/dephosphorylates the HPr-like catabolite repression protein crh on a specific serine residue. Therefore, by controlling the phosphorylation state of HPr and crh, HPrK/P is a sensor enzyme that plays a major role in the regulation of carbon metabolism and sugar transport: it mediates carbon catabolite repression (CCR), and regulates PTS-catalyzed carbohydrate uptake and inducer exclusion. The chain is HPr kinase/phosphorylase from Bacillus anthracis (strain A0248).